The primary structure comprises 426 residues: Enolase (426 aa).

Position 163 (Gln-163) interacts with (2R)-2-phosphoglycerate. The Proton donor role is filled by Glu-205. Mg(2+)-binding residues include Asp-242, Glu-286, and Asp-313. The (2R)-2-phosphoglycerate site is built by Lys-338, Arg-367, Ser-368, and Lys-389. The active-site Proton acceptor is Lys-338.

The protein belongs to the enolase family. Mg(2+) serves as cofactor.

Its subcellular location is the cytoplasm. The protein resides in the secreted. It localises to the cell surface. It carries out the reaction (2R)-2-phosphoglycerate = phosphoenolpyruvate + H2O. Its pathway is carbohydrate degradation; glycolysis; pyruvate from D-glyceraldehyde 3-phosphate: step 4/5. Catalyzes the reversible conversion of 2-phosphoglycerate (2-PG) into phosphoenolpyruvate (PEP). It is essential for the degradation of carbohydrates via glycolysis. The protein is Enolase of Helicobacter pylori (strain ATCC 700392 / 26695) (Campylobacter pylori).